The sequence spans 586 residues: Glutamine--tRNA ligase (586 aa).

Positions 58–68 (PEPNGYLHIGH) match the 'HIGH' region motif. ATP contacts are provided by residues 59 to 61 (EPN) and 65 to 71 (HIGHAKS). L-glutamine-binding residues include Asp-91 and Tyr-240. ATP contacts are provided by residues Thr-259 and 294–295 (RL). Residues 301–305 (VTSKR) carry the 'KMSKS' region motif.

This sequence belongs to the class-I aminoacyl-tRNA synthetase family. In terms of assembly, monomer.

It localises to the cytoplasm. The enzyme catalyses tRNA(Gln) + L-glutamine + ATP = L-glutaminyl-tRNA(Gln) + AMP + diphosphate. In Bordetella avium (strain 197N), this protein is Glutamine--tRNA ligase.